Consider the following 508-residue polypeptide: MDTMITTPLILILITCGANSQTVKPDTASESDQPTWSNPLFTYPEGCTLDKLSKVNASQLRCPRIFDDENRGLIAYPTSIRSLSVGNDLGEIHTQGNHIHKVLYRTICSTGFFGGQTIEKALVEMKLSTKEAGAYDTTTAAALYFPAPRCQWYTDNVQNDLIFYYTTQKSVLRDPYTRDFLDSDFIGGKCTKSPCQTHWSNVVWMGDAGIPACDSSQEIKAHLFVDKISNRVVKATSYGHHPWGLHRACMIEFCGKQWIRTDLGDLISVEYNSGAEILSFPKCEDKTMGMRGNLDDFAYLDDLVKASESREECLEAHAEIISTNSVTPYLLSKFRSPHPGINDVYAMHKGSIYHGMCMTVAVDEVSKDRTTYRAHRATSFTKWERPFGDEWEGFHGLHGNNTTIIPDLEKYVAQYKTSMMEPMSIKSVPHPSILAFYNETDLSGISIRKLDSFDLQSLHWSFWPTISALGGIPLVLLLAVAACCCWSGRPPTPSAPQSIPMYHLANRS.

The N-terminal stretch at 1-20 (MDTMITTPLILILITCGANS) is a signal peptide. Residues 21–461 (QTVKPDTASE…SFDLQSLHWS (441 aa)) are Virion surface-facing. Residues asparagine 56, asparagine 400, asparagine 401, and asparagine 438 are each glycosylated (N-linked (GlcNAc...) asparagine; by host). A helical membrane pass occupies residues 462–482 (FWPTISALGGIPLVLLLAVAA). Over 483–508 (CCCWSGRPPTPSAPQSIPMYHLANRS) the chain is Intravirion.

Belongs to the novirhabdovirus glycoprotein family. Homotrimer.

It is found in the virion membrane. Binds to specific receptor at cellular surface, bringing about the attachment of the virus particle to the cell. Plays a major role in the determination of host range restriction and virulence. Class I viral fusion protein. Responsible for penetration of the viral nucleocapsid into the cell cytoplasm by mediating the fusion of the membrane of the endocytosed virus particle with the endosomal membrane. Low pH in endosomes induce an irreversible conformational change in G, releasing a fusion hydrophobic peptide. This is Glycoprotein (G) from Salmo (IHNV).